We begin with the raw amino-acid sequence, 320 residues long: MLHYSNCNKICEKTVMNQRTIKTAIAVTGTGLHSGQPVDLEFQPQPIDTGIVFERSDIVGSTPIPASAFLVQDTMMSSNLVFGGTRVGTVEHLLSAIAGLGVDNLLIRVSASEIPIMDGSAAPFVGLLLQAGLCEQDALKKFIRIVRTVRVKVDDKWAELRPYSGFELNFEIDFDHPAIDKDFQHAQLQFSTQNFIEQLSSARTFGFLRDIEAMRQNNLALGGSMDNAIVIDEANILNEEGLRFNDEFVRHKILDALGDLYLIGYPILGRFNAYKSGHALNNLLVREILSDHNNFEIVTFDDNVTCPIEYLPLNGITVEG.

Zn(2+)-binding residues include His-92, His-251, and Asp-255. Catalysis depends on His-278, which acts as the Proton donor.

Belongs to the LpxC family. Zn(2+) serves as cofactor.

It catalyses the reaction a UDP-3-O-[(3R)-3-hydroxyacyl]-N-acetyl-alpha-D-glucosamine + H2O = a UDP-3-O-[(3R)-3-hydroxyacyl]-alpha-D-glucosamine + acetate. It participates in glycolipid biosynthesis; lipid IV(A) biosynthesis; lipid IV(A) from (3R)-3-hydroxytetradecanoyl-[acyl-carrier-protein] and UDP-N-acetyl-alpha-D-glucosamine: step 2/6. Functionally, catalyzes the hydrolysis of UDP-3-O-myristoyl-N-acetylglucosamine to form UDP-3-O-myristoylglucosamine and acetate, the committed step in lipid A biosynthesis. This is UDP-3-O-acyl-N-acetylglucosamine deacetylase from Psychrobacter arcticus (strain DSM 17307 / VKM B-2377 / 273-4).